Consider the following 970-residue polypeptide: m7GpppN-mRNA hydrolase (970 aa).

The Nudix hydrolase domain occupies 101–228 (KSIPVRGAAI…IKYYLINSMM (128 aa)). Serine 116 carries the post-translational modification Phosphoserine. The Nudix box signature appears at 134 to 155 (GKISKDENDIDCCIREVKEEIG). Mn(2+) is bound by residues glutamate 149 and glutamate 153. A compositionally biased stretch (basic and acidic residues) spans 302–314 (QHLKEQSGEHNQQ). 4 disordered regions span residues 302–341 (QHLK…ANNK), 417–465 (AVSQ…PKLK), 501–520 (SSQK…NDSV), and 528–692 (YEDF…LSST). Residues 315 to 334 (KDQQSSFSSQQQPSIFPSLS) show a composition bias toward low complexity. Phosphoserine is present on serine 439. A compositionally biased stretch (acidic residues) spans 528–539 (YEDFESSSDEEV). Residues 560 to 576 (SEKDSRRSQKEKPRNDA) are compositionally biased toward basic and acidic residues. The segment covering 577–590 (SKTNLNASAESNSV) has biased composition (polar residues). Over residues 596–608 (KSSPSTQSKQNSS) the composition is skewed to low complexity. The span at 625 to 637 (DAYEVFESSSDEE) shows a compositional bias: acidic residues. Residue threonine 677 is modified to Phosphothreonine. The span at 677-691 (TESNKSINETVGLSS) shows a compositional bias: polar residues. A phosphoserine mark is found at serine 679, serine 682, serine 751, serine 771, serine 773, and serine 778. The tract at residues 831 to 867 (LKKNDSTGYPRTEGGPSSEMSTSMKRNDATNNQELDK) is disordered. The span at 848–863 (SEMSTSMKRNDATNNQ) shows a compositional bias: polar residues.

The protein belongs to the Nudix hydrolase family. DCP2 subfamily. Component of the decapping complex composed of DCP1 and DCP2. Interacts with mRNA, LSM2, LSM4 and LSM8. Interacts with EDC3. Mn(2+) is required as a cofactor.

Its subcellular location is the cytoplasm. It is found in the P-body. It carries out the reaction a 5'-end (N(7)-methyl 5'-triphosphoguanosine)-ribonucleoside in mRNA + H2O = N(7)-methyl-GDP + a 5'-end phospho-ribonucleoside in mRNA + 2 H(+). In terms of biological role, catalytic component of the decapping complex necessary for the degradation of mRNAs, both in normal mRNA turnover and in nonsense-mediated mRNA decay. Removes the 7-methyl guanine cap structure from mRNA molecules, yielding a 5'-phosphorylated mRNA fragment and 7m-GDP. Decapping is the major pathway of mRNA degradation in yeast and occurs through deadenylation, decapping and subsequent 5' to 3' exonucleolytic decay of the transcript body. Blocks autophagy in nutrient-rich conditions by repressing the expression of ATG-related genes through degradation of their transcripts. This is m7GpppN-mRNA hydrolase from Saccharomyces cerevisiae (strain ATCC 204508 / S288c) (Baker's yeast).